A 447-amino-acid chain; its full sequence is Ribosomal protein uS12 methylthiotransferase RimO (447 aa).

The 111-residue stretch at Pro4 to Pro114 folds into the MTTase N-terminal domain. Positions 13, 49, 78, 147, 151, and 154 each coordinate [4Fe-4S] cluster. A Radical SAM core domain is found at Leu133–Ala370. The TRAM domain maps to Gln373–Lys443.

This sequence belongs to the methylthiotransferase family. RimO subfamily. [4Fe-4S] cluster is required as a cofactor.

Its subcellular location is the cytoplasm. The catalysed reaction is L-aspartate(89)-[ribosomal protein uS12]-hydrogen + (sulfur carrier)-SH + AH2 + 2 S-adenosyl-L-methionine = 3-methylsulfanyl-L-aspartate(89)-[ribosomal protein uS12]-hydrogen + (sulfur carrier)-H + 5'-deoxyadenosine + L-methionine + A + S-adenosyl-L-homocysteine + 2 H(+). Functionally, catalyzes the methylthiolation of an aspartic acid residue of ribosomal protein uS12. This chain is Ribosomal protein uS12 methylthiotransferase RimO, found in Acinetobacter baumannii (strain AB0057).